The chain runs to 421 residues: UDP-N-acetylglucosamine 1-carboxyvinyltransferase (421 aa).

22–23 contacts phosphoenolpyruvate; that stretch reads KN. UDP-N-acetyl-alpha-D-glucosamine is bound at residue Arg-92. Cys-116 serves as the catalytic Proton donor. Cys-116 is subject to 2-(S-cysteinyl)pyruvic acid O-phosphothioketal. UDP-N-acetyl-alpha-D-glucosamine is bound by residues 121 to 125, Asp-304, and Ile-326; that span reads RPVDQ.

Belongs to the EPSP synthase family. MurA subfamily.

The protein localises to the cytoplasm. It catalyses the reaction phosphoenolpyruvate + UDP-N-acetyl-alpha-D-glucosamine = UDP-N-acetyl-3-O-(1-carboxyvinyl)-alpha-D-glucosamine + phosphate. It functions in the pathway cell wall biogenesis; peptidoglycan biosynthesis. Cell wall formation. Adds enolpyruvyl to UDP-N-acetylglucosamine. This chain is UDP-N-acetylglucosamine 1-carboxyvinyltransferase, found in Bordetella avium (strain 197N).